Reading from the N-terminus, the 399-residue chain is UDP-N-acetylglucosamine--N-acetylmuramyl-(pentapeptide) pyrophosphoryl-undecaprenol N-acetylglucosamine transferase (399 aa).

The segment at 1–31 (MTSRFGHSQHPRRGRSARARAGRREGVQSNF) is disordered. Basic residues predominate over residues 7–21 (HSQHPRRGRSARARA). Residues 58–60 (TGG), Asn-170, Arg-206, Ser-234, Ile-288, and Gln-333 each bind UDP-N-acetyl-alpha-D-glucosamine.

Belongs to the glycosyltransferase 28 family. MurG subfamily.

It localises to the cell inner membrane. The catalysed reaction is di-trans,octa-cis-undecaprenyl diphospho-N-acetyl-alpha-D-muramoyl-L-alanyl-D-glutamyl-meso-2,6-diaminopimeloyl-D-alanyl-D-alanine + UDP-N-acetyl-alpha-D-glucosamine = di-trans,octa-cis-undecaprenyl diphospho-[N-acetyl-alpha-D-glucosaminyl-(1-&gt;4)]-N-acetyl-alpha-D-muramoyl-L-alanyl-D-glutamyl-meso-2,6-diaminopimeloyl-D-alanyl-D-alanine + UDP + H(+). Its pathway is cell wall biogenesis; peptidoglycan biosynthesis. In terms of biological role, cell wall formation. Catalyzes the transfer of a GlcNAc subunit on undecaprenyl-pyrophosphoryl-MurNAc-pentapeptide (lipid intermediate I) to form undecaprenyl-pyrophosphoryl-MurNAc-(pentapeptide)GlcNAc (lipid intermediate II). This is UDP-N-acetylglucosamine--N-acetylmuramyl-(pentapeptide) pyrophosphoryl-undecaprenol N-acetylglucosamine transferase from Acidovorax sp. (strain JS42).